The sequence spans 436 residues: C4-dicarboxylate transport protein 2 (436 aa).

A run of 9 helical transmembrane segments spans residues 14–34, 45–65, 77–97, 142–162, 198–218, 223–243, 290–310, 331–351, and 353–373; these read VLVAIAIGIALGHWYPETAVA, LIKMAIAPIIFCTVVTGIAGM, MALLYFEVVSTVALIIGLVVV, VVGAFANGDILQVLFFSVLFG, PIGAFGAMAFTIGAYGVGSLV, LMLCFYITCILFVLIVLGGIA, VVGLVIPTGYSFNLDGTSIYL, ITLLLVLLIASKGAAGVTGSG, and IVLAATLSAVGHLPVAGLALI. Residues 414–436 are disordered; sequence ELAGEGNASSPASDIPVGGREAV.

This sequence belongs to the dicarboxylate/amino acid:cation symporter (DAACS) (TC 2.A.23) family.

It localises to the cell inner membrane. In terms of biological role, responsible for the transport of dicarboxylates such as succinate, fumarate, and malate from the periplasm across the membrane. The chain is C4-dicarboxylate transport protein 2 from Pseudomonas aeruginosa (strain UCBPP-PA14).